A 515-amino-acid polypeptide reads, in one-letter code: Probable cytochrome P450 6d4 (515 aa).

Heme is bound at residue C457.

The protein belongs to the cytochrome P450 family. It depends on heme as a cofactor.

It is found in the endoplasmic reticulum membrane. Its subcellular location is the microsome membrane. Functionally, may be involved in the metabolism of insect hormones and in the breakdown of synthetic insecticides. This chain is Probable cytochrome P450 6d4 (Cyp6d4), found in Drosophila melanogaster (Fruit fly).